The primary structure comprises 599 residues: Kelch-like protein 24a (599 aa).

The 68-residue stretch at Thr65 to Thr132 folds into the BTB domain. Residues Cys167–Glu269 form the BACK domain. 6 Kelch repeats span residues Val313–Asn362, Ile364–Gly406, Lys407–Gly453, Leu455–His501, Ile503–Gly543, and Ile545–Arg591.

Forms homodimers. Component of the BCR(KLHL24) E3 ubiquitin ligase complex.

It localises to the perikaryon. The protein localises to the cell projection. The protein resides in the axon. Its subcellular location is the cytoplasm. It is found in the cell junction. It localises to the desmosome. The protein localises to the adherens junction. Functionally, necessary to maintain the balance between intermediate filament stability and degradation, a process that is essential for skin integrity. Reduces kainate receptor-mediated currents in brain neurons, most probably by modulating channel properties. It is required for proper heart development. The protein is Kelch-like protein 24a of Danio rerio (Zebrafish).